The sequence spans 476 residues: MGIKFLEVIKPFCAVLPEIQKPERKIQFREKVLWTAITLFIFLVCCQIPLFGIMSSDSADPFYWMRVILASNRGTLMELGISPIVTSGLIMQLLAGAKIIEVGDTPKDRALFNGAQKLFGMIITIGQAIVYVMTGMYGDPAEMGAGICLLIIIQLFVAGLIVLLLDELLQKGYGLGSGISLFIATNICETIVWKASSPTTINTGRGTEFEGAVIALFHLLATRTDKVRALREAFYRQNLPNLMNLIATVFVFAVVIYFQGFRVDLPIKSARYRGQYSSYPIKLFYTSNIPIILQSALVSNLYVISQMLSVRFSGNFLVNLLGQWADVSGGGPARSYPVGGLCYYLSPPESMGAILEDPVHVVVYIIFMLGSCAFFSKTWIEVSGSSAKDVAKQLKEQQMVMRGHRDTSMVHELNRYIPTAAAFGGLCIGALSVLADFLGAIGSGTGILLAVTIIYQYFEIFVKEQAEVGGMGALFF.

Residues 1–32 (MGIKFLEVIKPFCAVLPEIQKPERKIQFREKV) lie on the Cytoplasmic side of the membrane. Residues 33-53 (LWTAITLFIFLVCCQIPLFGI) form a helical membrane-spanning segment. Over 54–75 (MSSDSADPFYWMRVILASNRGT) the chain is Lumenal. Residues 76–96 (LMELGISPIVTSGLIMQLLAG) form a helical membrane-spanning segment. Residues 97–117 (AKIIEVGDTPKDRALFNGAQK) are Cytoplasmic-facing. A helical membrane pass occupies residues 118 to 138 (LFGMIITIGQAIVYVMTGMYG). Topologically, residues 139–144 (DPAEMG) are lumenal. A helical membrane pass occupies residues 145-165 (AGICLLIIIQLFVAGLIVLLL). The Cytoplasmic portion of the chain corresponds to 166-172 (DELLQKG). The helical transmembrane segment at 173-193 (YGLGSGISLFIATNICETIVW) threads the bilayer. At 194–240 (KASSPTTINTGRGTEFEGAVIALFHLLATRTDKVRALREAFYRQNLP) the chain is on the lumenal side. The chain crosses the membrane as a helical span at residues 241 to 261 (NLMNLIATVFVFAVVIYFQGF). Over 262 to 288 (RVDLPIKSARYRGQYSSYPIKLFYTSN) the chain is Cytoplasmic. Residues 289-309 (IPIILQSALVSNLYVISQMLS) form a helical membrane-spanning segment. The Lumenal portion of the chain corresponds to 310–353 (VRFSGNFLVNLLGQWADVSGGGPARSYPVGGLCYYLSPPESMGA). A helical membrane pass occupies residues 354 to 374 (ILEDPVHVVVYIIFMLGSCAF). The Cytoplasmic segment spans residues 375-420 (FSKTWIEVSGSSAKDVAKQLKEQQMVMRGHRDTSMVHELNRYIPTA). 2 helical membrane passes run 421 to 441 (AAFGGLCIGALSVLADFLGAI) and 442 to 462 (GSGTGILLAVTIIYQYFEIFV). The Cytoplasmic segment spans residues 463 to 476 (KEQAEVGGMGALFF).

It belongs to the SecY/SEC61-alpha family. As to quaternary structure, the SEC61 channel-forming translocon complex consists of channel-forming core components SEC61A1, SEC61B and SEC61G and different auxiliary components such as SEC62 and SEC63.

The protein resides in the endoplasmic reticulum membrane. Functionally, component of SEC61 channel-forming translocon complex that mediates transport of signal peptide-containing precursor polypeptides across the endoplasmic reticulum (ER). Forms a ribosome receptor and a gated pore in the ER membrane, both functions required for cotranslational translocation of nascent polypeptides. This Pongo abelii (Sumatran orangutan) protein is Protein transport protein Sec61 subunit alpha isoform 2 (SEC61A2).